A 288-amino-acid polypeptide reads, in one-letter code: Small ribosomal subunit protein uS3 (288 aa).

The region spanning 38–106 is the KH type-2 domain; sequence IRRMMSKGLE…QVQLNIIEVK (69 aa). Residues 209–288 are disordered; sequence PGRETPAEAP…TQPAETQQEG (80 aa). Over residues 219 to 232 the composition is skewed to basic and acidic residues; the sequence is SRPRRERGDRSERP. Residues 249-264 are compositionally biased toward low complexity; it reads AGRAAATTIAQAAETP. Residues 277–288 show a composition bias toward polar residues; sequence AATQPAETQQEG.

It belongs to the universal ribosomal protein uS3 family. In terms of assembly, part of the 30S ribosomal subunit. Forms a tight complex with proteins S10 and S14.

Binds the lower part of the 30S subunit head. Binds mRNA in the 70S ribosome, positioning it for translation. The polypeptide is Small ribosomal subunit protein uS3 (Salinispora tropica (strain ATCC BAA-916 / DSM 44818 / JCM 13857 / NBRC 105044 / CNB-440)).